Consider the following 843-residue polypeptide: Protein translocase subunit SecA (843 aa).

ATP-binding positions include Gln-91, 109–113 (GEGKT), and Asp-498. The segment covering 796 to 825 (DFGKAEHVSAEDGKEKAKAEPYVKDEHIGR) has biased composition (basic and acidic residues). The tract at residues 796 to 833 (DFGKAEHVSAEDGKEKAKAEPYVKDEHIGRNDPCPCGS) is disordered. The Zn(2+) site is built by Cys-829, Cys-831, Cys-840, and His-841.

It belongs to the SecA family. Monomer and homodimer. Part of the essential Sec protein translocation apparatus which comprises SecA, SecYEG and auxiliary proteins SecDF. Other proteins may also be involved. It depends on Zn(2+) as a cofactor.

It localises to the cell membrane. Its subcellular location is the cytoplasm. The catalysed reaction is ATP + H2O + cellular proteinSide 1 = ADP + phosphate + cellular proteinSide 2.. Its function is as follows. Part of the Sec protein translocase complex. Interacts with the SecYEG preprotein conducting channel. Has a central role in coupling the hydrolysis of ATP to the transfer of proteins into and across the cell membrane, serving as an ATP-driven molecular motor driving the stepwise translocation of polypeptide chains across the membrane. The polypeptide is Protein translocase subunit SecA (Staphylococcus saprophyticus subsp. saprophyticus (strain ATCC 15305 / DSM 20229 / NCIMB 8711 / NCTC 7292 / S-41)).